The chain runs to 395 residues: uncharacterized protein (395 aa).

Disordered regions lie at residues 1-121, 136-187, 308-335, and 365-395; these read MLLP…TANS, MRMK…LDRN, QNNE…SKDE, and IQKF…NEGD. A compositionally biased stretch (basic and acidic residues) spans 13–28; the sequence is PKGEAKSLVARERKSQ. Basic residues predominate over residues 64-73; it reads KSAKLRRKKS. Positions 97–111 are enriched in basic and acidic residues; the sequence is SIEKKKEEMTSKLPE. The span at 144–164 shows a compositional bias: polar residues; that stretch reads TSRMATKSDSSLETMPESSHN. A compositionally biased stretch (basic residues) spans 170-179; that stretch reads KSRKSQRTRG. A compositionally biased stretch (basic residues) spans 365 to 377; that stretch reads IQKFRKKYQKQLK. Positions 378 to 395 are enriched in basic and acidic residues; the sequence is KSQEEKKDDTKTAKNEGD.

This is an uncharacterized protein from Caenorhabditis elegans.